The sequence spans 225 residues: UPF0758 protein MADE_1000235 (225 aa).

Positions 102 to 224 constitute an MPN domain; it reads VFNNVDDTKR…TISFAQRGLL (123 aa). Residues histidine 173, histidine 175, and aspartate 186 each coordinate Zn(2+). The short motif at 173 to 186 is the JAMM motif element; that stretch reads HNHPSGVAEPSHAD.

It belongs to the UPF0758 family.

The protein is UPF0758 protein MADE_1000235 of Alteromonas mediterranea (strain DSM 17117 / CIP 110805 / LMG 28347 / Deep ecotype).